A 335-amino-acid polypeptide reads, in one-letter code: DNA-directed RNA polymerase subunit alpha (335 aa).

The alpha N-terminal domain (alpha-NTD) stretch occupies residues 1 to 233 (MMLNATEFLT…QQISIFVDLE (233 aa)). Residues 247–335 (VDPVLLRPVD…VDDRFSYRSR (89 aa)) are alpha C-terminal domain (alpha-CTD).

This sequence belongs to the RNA polymerase alpha chain family. As to quaternary structure, homodimer. The RNAP catalytic core consists of 2 alpha, 1 beta, 1 beta' and 1 omega subunit. When a sigma factor is associated with the core the holoenzyme is formed, which can initiate transcription.

It catalyses the reaction RNA(n) + a ribonucleoside 5'-triphosphate = RNA(n+1) + diphosphate. DNA-dependent RNA polymerase catalyzes the transcription of DNA into RNA using the four ribonucleoside triphosphates as substrates. The protein is DNA-directed RNA polymerase subunit alpha of Psychrobacter sp. (strain PRwf-1).